We begin with the raw amino-acid sequence, 128 residues long: Large ribosomal subunit protein bL19 (128 aa).

It belongs to the bacterial ribosomal protein bL19 family.

Functionally, this protein is located at the 30S-50S ribosomal subunit interface and may play a role in the structure and function of the aminoacyl-tRNA binding site. The chain is Large ribosomal subunit protein bL19 from Caldicellulosiruptor bescii (strain ATCC BAA-1888 / DSM 6725 / KCTC 15123 / Z-1320) (Anaerocellum thermophilum).